The following is a 211-amino-acid chain: Uracil phosphoribosyltransferase (211 aa).

Residues Arg79, Arg104, and 131–139 (DPMLATGGS) contribute to the 5-phospho-alpha-D-ribose 1-diphosphate site. Residues Ile196 and 201 to 203 (GDA) contribute to the uracil site. Residue Asp202 participates in 5-phospho-alpha-D-ribose 1-diphosphate binding.

This sequence belongs to the UPRTase family. Mg(2+) serves as cofactor.

The catalysed reaction is UMP + diphosphate = 5-phospho-alpha-D-ribose 1-diphosphate + uracil. It participates in pyrimidine metabolism; UMP biosynthesis via salvage pathway; UMP from uracil: step 1/1. With respect to regulation, allosterically activated by GTP. Functionally, catalyzes the conversion of uracil and 5-phospho-alpha-D-ribose 1-diphosphate (PRPP) to UMP and diphosphate. In Lactococcus lactis subsp. cremoris (strain SK11), this protein is Uracil phosphoribosyltransferase.